The sequence spans 374 residues: Translocating chain-associated membrane protein 1 (374 aa).

The Cytoplasmic segment spans residues Met1–Cys29. Residues Val30–Phe50 form a helical membrane-spanning segment. At Val51 to Ala81 the chain is on the lumenal side. Asn56 carries an N-linked (GlcNAc...) asparagine glycan. The chain crosses the membrane as a helical span at residues Thr82 to Leu102. The Cytoplasmic segment spans residues Asp103–Glu121. The 210-residue stretch at Ser117 to His326 folds into the TLC domain. A helical transmembrane segment spans residues Ser122–Ser142. The Lumenal portion of the chain corresponds to Glu143–Asn159. Residues Leu160 to Phe180 traverse the membrane as a helical segment. Residues Pro181–Asp192 lie on the Cytoplasmic side of the membrane. A helical membrane pass occupies residues Ile193–Leu213. Residue Asn214 is a topological domain, lumenal. Residues Leu215–Ile235 traverse the membrane as a helical segment. The Cytoplasmic portion of the chain corresponds to Ser236–Ser251. A helical transmembrane segment spans residues Leu252–Val272. Residues Gly273–Arg297 are Lumenal-facing. Residues Ile298 to Phe318 form a helical membrane-spanning segment. At Gln319 to Ser374 the chain is on the cytoplasmic side. Residues Ala331–Ser374 are disordered. Basic residues predominate over residues Val334–Arg347. The span at Asn352–Ala363 shows a compositional bias: polar residues. Residue Ser365 is modified to Phosphoserine.

It belongs to the TRAM family. In terms of assembly, interacts with SEC61B. May interact with Derlin-1/DERL1. Post-translationally, N-glycosylated.

The protein resides in the endoplasmic reticulum membrane. In terms of biological role, involved in the translocation of nascent protein chains into or through the endoplasmic reticulum (ER) membrane by facilitating the proper chain positioning at the SEC61 channel. Regulates the exposure of nascent secretory protein chain to the cytosol during translocation into the ER. May affect the phospholipid bilayer in the vicinity of the lateral gate of the SEC61 channel, thereby facilitating ER protein transport. Intimately associates with transmembrane (TM) domain of nascent membrane proteins during the entire integration process into the ER membrane. Associates with the second TM domain of G-protein-coupled receptor opsin/OPSD nascent chain in the ER membrane, which may facilitate its integration into the membrane. Under conditions of ER stress, participates in the disposal of misfolded ER membrane proteins during the unfolded protein response (UPR), an integrated stress response (ISR) pathway, by selectively retrotranslocating misfolded ER-membrane proteins from the ER into the cytosol where they are ubiquitinated and degraded by the proteasome. The chain is Translocating chain-associated membrane protein 1 (TRAM1) from Bos taurus (Bovine).